The following is a 529-amino-acid chain: Peptide chain release factor 3 (529 aa).

Residues A11–M280 enclose the tr-type G domain. GTP-binding positions include S20–T27, D88–H92, and N142–D145.

The protein belongs to the TRAFAC class translation factor GTPase superfamily. Classic translation factor GTPase family. PrfC subfamily.

Its subcellular location is the cytoplasm. Functionally, increases the formation of ribosomal termination complexes and stimulates activities of RF-1 and RF-2. It binds guanine nucleotides and has strong preference for UGA stop codons. It may interact directly with the ribosome. The stimulation of RF-1 and RF-2 is significantly reduced by GTP and GDP, but not by GMP. The sequence is that of Peptide chain release factor 3 from Erwinia tasmaniensis (strain DSM 17950 / CFBP 7177 / CIP 109463 / NCPPB 4357 / Et1/99).